We begin with the raw amino-acid sequence, 245 residues long: Bis(5'-nucleosyl)-tetraphosphatase PrpE [asymmetrical] (245 aa).

Belongs to the PrpE family. The cofactor is Ni(2+).

It carries out the reaction P(1),P(4)-bis(5'-guanosyl) tetraphosphate + H2O = GMP + GTP + 2 H(+). Asymmetrically hydrolyzes Ap4p to yield AMP and ATP. The sequence is that of Bis(5'-nucleosyl)-tetraphosphatase PrpE [asymmetrical] from Geobacillus thermodenitrificans (strain NG80-2).